We begin with the raw amino-acid sequence, 317 residues long: Transaldolase (317 aa).

Catalysis depends on K131, which acts as the Schiff-base intermediate with substrate.

The protein belongs to the transaldolase family. Type 1 subfamily. Homodimer.

It is found in the cytoplasm. The catalysed reaction is D-sedoheptulose 7-phosphate + D-glyceraldehyde 3-phosphate = D-erythrose 4-phosphate + beta-D-fructose 6-phosphate. The protein operates within carbohydrate degradation; pentose phosphate pathway; D-glyceraldehyde 3-phosphate and beta-D-fructose 6-phosphate from D-ribose 5-phosphate and D-xylulose 5-phosphate (non-oxidative stage): step 2/3. Transaldolase is important for the balance of metabolites in the pentose-phosphate pathway. The chain is Transaldolase from Baumannia cicadellinicola subsp. Homalodisca coagulata.